Consider the following 119-residue polypeptide: Ribosome-binding factor A (119 aa).

Belongs to the RbfA family. As to quaternary structure, monomer. Binds 30S ribosomal subunits, but not 50S ribosomal subunits or 70S ribosomes.

Its subcellular location is the cytoplasm. Functionally, one of several proteins that assist in the late maturation steps of the functional core of the 30S ribosomal subunit. Associates with free 30S ribosomal subunits (but not with 30S subunits that are part of 70S ribosomes or polysomes). Required for efficient processing of 16S rRNA. May interact with the 5'-terminal helix region of 16S rRNA. This is Ribosome-binding factor A from Pelodictyon phaeoclathratiforme (strain DSM 5477 / BU-1).